The following is a 986-amino-acid chain: Rho guanine nucleotide exchange factor 2 (986 aa).

The segment at 39-86 (GHLFTTISVSGMTMCYACNKSITAKEALICPTCNVTIHNRCKDTLANC) adopts a Phorbol-ester/DAG-type zinc-finger fold. 5 positions are modified to phosphoserine: Ser109, Ser122, Ser129, Ser133, and Ser137. The segment at 131–161 (RQSLLGSRRGRSSLSLAKSVSTTNIAGHFND) is interaction with DYNLT1. At Ser143 the chain carries Phosphoserine; by PAK4. A phosphoserine mark is found at Ser151, Ser163, Ser172, Ser174, and Ser177. The 198-residue stretch at 235 to 432 (KQQDVIYELI…KELLSNVDEG (198 aa)) folds into the DH domain. Lys353 bears the N6-acetyllysine mark. The 100-residue stretch at 472–571 (KLIHDGCLLW…WIRVIQQSVR (100 aa)) folds into the PH domain. Residues 587–611 (EAYLRRIKMELQQKDRALVELLREK) adopt a coiled-coil conformation. Phosphoserine occurs at positions 645 and 648. Phosphothreonine; by MAPK1 or MAPK3 is present on Thr679. Residues 683–705 (PALPLEPDSGGNTSPGVTANGEA) are disordered. 4 positions are modified to phosphoserine: Ser691, Ser696, Ser711, and Ser782. Positions 798–867 (EKQATELALL…RQLAALGQTE (70 aa)) form a coiled coil. A disordered region spans residues 862 to 986 (ALGQTEPLPA…RDGEAVASES (125 aa)). A Phosphoserine; by PAK1 and AURKA modification is found at Ser886. Tyr894 is subject to Phosphotyrosine. Ser896 carries the phosphoserine; by PAK4 modification. Basic and acidic residues predominate over residues 920-939 (RNFEDRERQELGSPEERLQD). Ser932, Ser940, and Ser941 each carry phosphoserine. Positions 941–950 (SDPDTGSEEE) are enriched in acidic residues. Phosphothreonine is present on Thr945. Residues Ser947, Ser952, Ser953, Ser956, and Ser960 each carry the phosphoserine modification.

In terms of assembly, found in a complex composed at least of ARHGEF2, NOD2 and RIPK2. Interacts with RIPK2; the interaction mediates tyrosine phosphorylation of RIPK2 by Src kinase CSK. Interacts with RIPK1 and RIPK3. Interacts with YWHAZ/14-3-3 zeta; when phosphorylated at Ser-886. Interacts with the kinases PAK4, AURKA and MAPK1. Interacts with RHOA and RAC1. Interacts with NOD1. Interacts (via the N-terminal zinc finger) with CAPN6 (via domain II). Interacts with DYNLT1. Post-translationally, phosphorylation of Ser-886 by PAK1 induces binding to protein YWHAZ, promoting its relocation to microtubules and the inhibition of its activity. Phosphorylated by AURKA and CDK1 during mitosis, which negatively regulates its activity. Phosphorylation by MAPK1 or MAPK3 increases nucleotide exchange activity. Phosphorylation by PAK4 releases GEF-H1 from the microtubules. Phosphorylated on serine, threonine and tyrosine residues in a RIPK2-dependent manner.

It is found in the cytoplasm. Its subcellular location is the cytoskeleton. The protein resides in the cell junction. It localises to the tight junction. The protein localises to the golgi apparatus. It is found in the spindle. Its subcellular location is the cell projection. The protein resides in the ruffle membrane. It localises to the cytoplasmic vesicle. Functionally, activates Rho-GTPases by promoting the exchange of GDP for GTP. May be involved in epithelial barrier permeability, cell motility and polarization, dendritic spine morphology, antigen presentation, leukemic cell differentiation, cell cycle regulation, innate immune response, and cancer. Binds Rac-GTPases, but does not seem to promote nucleotide exchange activity toward Rac-GTPases, which was uniquely reported in PubMed:9857026. May stimulate instead the cortical activity of Rac. Inactive toward CDC42, TC10, or Ras-GTPases. Forms an intracellular sensing system along with NOD1 for the detection of microbial effectors during cell invasion by pathogens. Required for RHOA and RIP2 dependent NF-kappaB signaling pathways activation upon S.flexneri cell invasion. Involved not only in sensing peptidoglycan (PGN)-derived muropeptides through NOD1 that is independent of its GEF activity, but also in the activation of NF-kappaB by Shigella effector proteins (IpgB2 and OspB) which requires its GEF activity and the activation of RhoA. Involved in innate immune signaling transduction pathway promoting cytokine IL6/interleukin-6 and TNF-alpha secretion in macrophage upon stimulation by bacterial peptidoglycans; acts as a signaling intermediate between NOD2 receptor and RIPK2 kinase. Contributes to the tyrosine phosphorylation of RIPK2 through Src tyrosine kinase leading to NF-kappaB activation by NOD2. Overexpression activates Rho-, but not Rac-GTPases, and increases paracellular permeability. Involved in neuronal progenitor cell division and differentiation. Involved in the migration of precerebellar neurons. The chain is Rho guanine nucleotide exchange factor 2 (ARHGEF2) from Homo sapiens (Human).